Reading from the N-terminus, the 308-residue chain is Putative protein TIC 214 N-terminal part (308 aa).

6 helical membrane-spanning segments follow: residues 18–38 (IINS…FSIG), 64–84 (FITG…HLAL), 87–107 (PHTI…WNNH), 124–144 (LSIQ…HFIL), 172–192 (VGWL…LSWI), and 215–235 (IFSI…PSPI). The span at 239-249 (KLKETSEMEER) shows a compositional bias: basic and acidic residues. The disordered stretch occupies residues 239–308 (KLKETSEMEE…RDPSEWKGNI (70 aa)). Positions 250–262 (GESEEETDVEIET) are enriched in acidic residues. The segment covering 264-273 (SETKETKQEQ) has biased composition (basic and acidic residues). The segment covering 275 to 293 (GSTEEDPSLCSEEQEDPDK) has biased composition (acidic residues). Positions 294-308 (LDETGRDPSEWKGNI) are enriched in basic and acidic residues.

Belongs to the TIC214 family. Part of the Tic complex.

The protein resides in the plastid. It is found in the chloroplast inner membrane. Its function is as follows. Involved in protein precursor import into chloroplasts. May be part of an intermediate translocation complex acting as a protein-conducting channel at the inner envelope. The chain is Putative protein TIC 214 N-terminal part from Piper cenocladum (Ant piper).